The chain runs to 890 residues: Alanine--tRNA ligase (890 aa).

4 residues coordinate Zn(2+): H565, H569, C677, and H681.

It belongs to the class-II aminoacyl-tRNA synthetase family. Requires Zn(2+) as cofactor.

The protein localises to the cytoplasm. The catalysed reaction is tRNA(Ala) + L-alanine + ATP = L-alanyl-tRNA(Ala) + AMP + diphosphate. Catalyzes the attachment of alanine to tRNA(Ala) in a two-step reaction: alanine is first activated by ATP to form Ala-AMP and then transferred to the acceptor end of tRNA(Ala). Also edits incorrectly charged Ser-tRNA(Ala) and Gly-tRNA(Ala) via its editing domain. The protein is Alanine--tRNA ligase of Zymomonas mobilis subsp. mobilis (strain ATCC 31821 / ZM4 / CP4).